We begin with the raw amino-acid sequence, 290 residues long: Pyridoxal kinase PdxY (290 aa).

Residues serine 12 and 47–48 contribute to the substrate site; that span reads TQ. ATP-binding positions include aspartate 114, glutamate 151, lysine 184, and 211–214; that span reads RPLL. Position 225 (aspartate 225) interacts with substrate.

It belongs to the pyridoxine kinase family. PdxY subfamily. In terms of assembly, homodimer. Mg(2+) is required as a cofactor.

It catalyses the reaction pyridoxal + ATP = pyridoxal 5'-phosphate + ADP + H(+). It functions in the pathway cofactor metabolism; pyridoxal 5'-phosphate salvage; pyridoxal 5'-phosphate from pyridoxal: step 1/1. Pyridoxal kinase involved in the salvage pathway of pyridoxal 5'-phosphate (PLP). Catalyzes the phosphorylation of pyridoxal to PLP. The sequence is that of Pyridoxal kinase PdxY from Pseudomonas putida (strain W619).